We begin with the raw amino-acid sequence, 678 residues long: Beta-catenin-like protein hmp-2 (678 aa).

ARM repeat units lie at residues 153–192, 280–319, 320–359, 362–403, and 409–448; these read RGGP…NLLM, PSNK…RNLS, DSAT…NLTC, TRNK…HCTA, and EEAQ…NSAL.

This sequence belongs to the beta-catenin family. In terms of assembly, component of a core catenin-cadherin complex consisting of hmr-1, hmp-1 and hmp-2; the complex localizes to adherens junctions. Interacts with hmr-1; the interaction is direct. May interact with hmp-1. Interacts with frk-1. In terms of tissue distribution, epidermal cells.

The protein localises to the cell junction. It localises to the adherens junction. In terms of biological role, required for cell migration during body enclosure and cell shape changes during body elongation. Plays a role in recruitment of the cadherin protein hmr-1 to adherens junctions. The sequence is that of Beta-catenin-like protein hmp-2 (hmp-2) from Caenorhabditis elegans.